The primary structure comprises 334 residues: Ribosomal RNA small subunit methyltransferase C (334 aa).

It belongs to the methyltransferase superfamily. RsmC family. As to quaternary structure, monomer.

It localises to the cytoplasm. It carries out the reaction guanosine(1207) in 16S rRNA + S-adenosyl-L-methionine = N(2)-methylguanosine(1207) in 16S rRNA + S-adenosyl-L-homocysteine + H(+). In terms of biological role, specifically methylates the guanine in position 1207 of 16S rRNA in the 30S particle. This is Ribosomal RNA small subunit methyltransferase C from Idiomarina loihiensis (strain ATCC BAA-735 / DSM 15497 / L2-TR).